A 456-amino-acid chain; its full sequence is Ribonuclease inhibitor (456 aa).

Met1 carries the post-translational modification N-acetylmethionine. 15 LRR repeats span residues 15 to 43 (WTEL…CKDI), 44 to 71 (GSAL…VHLV), 72 to 100 (LQGL…CGVL), 101 to 128 (PSTL…LRLL), 129 to 157 (CEGL…CEPL), 158 to 185 (ASVL…ARVL), 186 to 214 (GQGL…CKDL), 215 to 242 (CGIV…IAEL), 243 to 271 (CPGL…CRDL), 272 to 299 (CRVL…ARLL), 300 to 328 (CESL…CQHV), 329 to 356 (SLML…IQEL), 357 to 385 (CQAL…CSSL), 386 to 413 (ASLL…VLQL), and 414 to 442 (LGSL…EDRL). Ser86 bears the Phosphoserine mark.

Forms high-affinity heterodimers with RNASE1, ANG and RNASE2.

The protein localises to the cytoplasm. The protein resides in the nucleus. Ribonuclease inhibitor which inhibits RNASE1, RNASE2 and angiogenin (ANG). May play a role in redox homeostasis. Required to inhibit the cytotoxic tRNA ribonuclease activity of ANG in the cytoplasm in absence of stress. Relocates to the nucleus in response to stress, relieving inhibition of ANG in the cytoplasm, and inhibiting the angiogenic activity of ANG in the nucleus. The chain is Ribonuclease inhibitor (RNH1) from Sus scrofa (Pig).